We begin with the raw amino-acid sequence, 340 residues long: Probable rRNA-processing protein EBP2 homolog (340 aa).

Positions 1–10 (MVRKMNKLAK) are enriched in basic residues. 2 disordered regions span residues 1–59 (MVRK…DDDE) and 245–340 (HGLD…RGRR). Composition is skewed to acidic residues over residues 23-37 (PESDSDGSEFDFDNA) and 46-59 (MDIEEVESDGDDDE). A coiled-coil region spans residues 206 to 245 (QKEVLAAKNTEKKNLAEAVKKHKKGMKQQLEDMLNNVKRH). 2 stretches are compositionally biased toward gly residues: residues 264–277 (GRGGAGRGGAGRGG) and 318–333 (PRGGFGGRGRGGGRGG).

The protein belongs to the EBP2 family.

Its subcellular location is the nucleus. It localises to the nucleolus. Required for the processing of the 27S pre-rRNA. The chain is Probable rRNA-processing protein EBP2 homolog from Caenorhabditis elegans.